A 593-amino-acid chain; its full sequence is A-type ATP synthase subunit A (593 aa).

Residue 236-243 participates in ATP binding; it reads GPFGSGKT.

This sequence belongs to the ATPase alpha/beta chains family. Has multiple subunits with at least A(3), B(3), C, D, E, F, H, I and proteolipid K(x).

The protein localises to the cell membrane. It catalyses the reaction ATP + H2O + 4 H(+)(in) = ADP + phosphate + 5 H(+)(out). In terms of biological role, produces ATP from ADP in the presence of a proton gradient across the membrane. The archaeal alpha chain is a catalytic subunit. Component of the A-type ATP synthase that produces ATP from ADP in the presence of a proton gradient across the membrane. The A chain is the catalytic subunit. In Pyrobaculum aerophilum (strain ATCC 51768 / DSM 7523 / JCM 9630 / CIP 104966 / NBRC 100827 / IM2), this protein is A-type ATP synthase subunit A.